The primary structure comprises 137 residues: Large ribosomal subunit protein eL28 (137 aa).

N-acetylserine is present on S2. Glycyl lysine isopeptide (Lys-Gly) (interchain with G-Cter in SUMO2) cross-links involve residues K58 and K65. Residue S115 is modified to Phosphoserine.

Belongs to the eukaryotic ribosomal protein eL28 family. As to quaternary structure, component of the large ribosomal subunit.

It is found in the cytoplasm. Component of the large ribosomal subunit. The ribosome is a large ribonucleoprotein complex responsible for the synthesis of proteins in the cell. This Bos taurus (Bovine) protein is Large ribosomal subunit protein eL28 (RPL28).